The chain runs to 367 residues: Queuine tRNA-ribosyltransferase (367 aa).

The Proton acceptor role is filled by Asp-92. Residues 92-96 (DSGGF), Asp-146, Gln-188, and Gly-215 each bind substrate. Positions 246–252 (GVGTPKD) are RNA binding. Asp-265 serves as the catalytic Nucleophile. Residues Cys-303, Cys-305, Cys-308, and His-334 each contribute to the Zn(2+) site.

Belongs to the queuine tRNA-ribosyltransferase family. As to quaternary structure, homodimer. Within each dimer, one monomer is responsible for RNA recognition and catalysis, while the other monomer binds to the replacement base PreQ1. Requires Zn(2+) as cofactor.

It catalyses the reaction 7-aminomethyl-7-carbaguanine + guanosine(34) in tRNA = 7-aminomethyl-7-carbaguanosine(34) in tRNA + guanine. Its pathway is tRNA modification; tRNA-queuosine biosynthesis. Functionally, catalyzes the base-exchange of a guanine (G) residue with the queuine precursor 7-aminomethyl-7-deazaguanine (PreQ1) at position 34 (anticodon wobble position) in tRNAs with GU(N) anticodons (tRNA-Asp, -Asn, -His and -Tyr). Catalysis occurs through a double-displacement mechanism. The nucleophile active site attacks the C1' of nucleotide 34 to detach the guanine base from the RNA, forming a covalent enzyme-RNA intermediate. The proton acceptor active site deprotonates the incoming PreQ1, allowing a nucleophilic attack on the C1' of the ribose to form the product. After dissociation, two additional enzymatic reactions on the tRNA convert PreQ1 to queuine (Q), resulting in the hypermodified nucleoside queuosine (7-(((4,5-cis-dihydroxy-2-cyclopenten-1-yl)amino)methyl)-7-deazaguanosine). The polypeptide is Queuine tRNA-ribosyltransferase (Francisella tularensis subsp. mediasiatica (strain FSC147)).